A 293-amino-acid polypeptide reads, in one-letter code: MHMQLRKRKRVDYSGRNQTSDPPSTTTAAVPSIIVPKKRKVVAQNMVSPAIRATTTTLGTSNIIIPKPLQRPKFHNSASLSSPDDDPEKISVLEVQKNLSNLIKRQQRLFYKDIHKPTLAGLKNFEMLRLPNDLKLLQNIVNLLYSFEQLNSDSKTRPVTTSKLKASSQAHSDKLKKMLAERKPPFSHPSHSGTAYHNDIIHEIANLHSINLVDLINLEVYNNNCHTNNTALQTTANSLTLNSIIKKLDKPILKERNNSLVWPHKSRFKAKRNQPSPGQSLINNTDITLYNDV.

Basic residues predominate over residues 1–10 (MHMQLRKRKR). The tract at residues 1 to 28 (MHMQLRKRKRVDYSGRNQTSDPPSTTTA) is disordered. Positions 15 to 28 (GRNQTSDPPSTTTA) are enriched in polar residues.

The protein resides in the nucleus. This is an uncharacterized protein from Saccharomyces cerevisiae (strain ATCC 204508 / S288c) (Baker's yeast).